The following is a 650-amino-acid chain: PTS system mannose-specific EIIBCA component (650 aa).

The PTS EIIB type-2 domain maps to 1-98; it reads MKLLAITSCP…PEELIQKALN (98 aa). Residue cysteine 9 is the Phosphocysteine intermediate; for EIIB activity of the active site. The 334-residue stretch at 123–456 folds into the PTS EIIC type-2 domain; sequence IYRHLMNGVS…SLVTALFVNV (334 aa). 7 consecutive transmembrane segments (helical) span residues 133–153, 174–194, 199–219, 221–241, 256–276, 297–317, and 336–356; these read FMVPFIVVGGLLIAVALTLGG, IGSASFSFMIPILAGYIAYSI, GLVPGMIGGYIAATGSFYDSA, GAGFLGGIIAGFLAGYAALWI, IIIIPVFASLIVGLAFVFLIG, SSILLALILGAMISFDMGGPV, and IMGPIAVAICIPPIGLGIATF. Serine 365 bears the Phosphoserine mark. Transmembrane regions (helical) follow at residues 369–389, 396–416, and 436–456; these read MGKAAFTMGLFGITEGAIPFA, VIPSIMAGSMTGSVIAMIGNV, and VLMFFIAVIAGSLVTALFVNV. The region spanning 504-649 is the PTS EIIA type-2 domain; the sequence is DIISPELIEP…EEAYKLLEEI (146 aa). Histidine 566 acts as the Tele-phosphohistidine intermediate; for EIIA activity in catalysis.

The protein localises to the cell membrane. The catalysed reaction is D-mannose(out) + N(pros)-phospho-L-histidyl-[protein] = D-mannose 6-phosphate(in) + L-histidyl-[protein]. Its function is as follows. The phosphoenolpyruvate-dependent sugar phosphotransferase system (sugar PTS), a major carbohydrate active -transport system, catalyzes the phosphorylation of incoming sugar substrates concomitantly with their translocation across the cell membrane. This system is involved in mannose transport. The polypeptide is PTS system mannose-specific EIIBCA component (manP) (Bacillus subtilis (strain 168)).